We begin with the raw amino-acid sequence, 157 residues long: Transcriptional regulator MraZ (157 aa).

2 consecutive SpoVT-AbrB domains span residues 7 to 54 and 83 to 126; these read TYTM…GTSL and TEML…EPER.

It belongs to the MraZ family. Forms oligomers.

It localises to the cytoplasm. The protein resides in the nucleoid. This is Transcriptional regulator MraZ from Azorhizobium caulinodans (strain ATCC 43989 / DSM 5975 / JCM 20966 / LMG 6465 / NBRC 14845 / NCIMB 13405 / ORS 571).